Here is a 139-residue protein sequence, read N- to C-terminus: Transcription antitermination protein NusB (139 aa).

Belongs to the NusB family.

Functionally, involved in transcription antitermination. Required for transcription of ribosomal RNA (rRNA) genes. Binds specifically to the boxA antiterminator sequence of the ribosomal RNA (rrn) operons. This Cronobacter sakazakii (strain ATCC BAA-894) (Enterobacter sakazakii) protein is Transcription antitermination protein NusB.